Reading from the N-terminus, the 187-residue chain is Adenylate kinase (187 aa).

10–15 (GSGKGT) contacts ATP. Positions 30–59 (STGDLLRAEVAAGSPLGLKAKEVMARGDLV) are NMP. AMP-binding positions include Thr31, Arg36, 57-59 (DLV), 85-88 (GYPR), and Gln92. An LID region spans residues 126 to 136 (GRAKAEGREDD). Arg127 contacts ATP. Residues Arg133 and Arg144 each coordinate AMP. Gly172 contributes to the ATP binding site.

The protein belongs to the adenylate kinase family. Monomer.

It is found in the cytoplasm. The catalysed reaction is AMP + ATP = 2 ADP. It participates in purine metabolism; AMP biosynthesis via salvage pathway; AMP from ADP: step 1/1. In terms of biological role, catalyzes the reversible transfer of the terminal phosphate group between ATP and AMP. Plays an important role in cellular energy homeostasis and in adenine nucleotide metabolism. This chain is Adenylate kinase, found in Xanthomonas oryzae pv. oryzae (strain MAFF 311018).